A 1413-amino-acid polypeptide reads, in one-letter code: ABC-type transporter vrcC (1413 aa).

The region spanning 108–365 (VWFEALALAR…FLDMGFACPE (258 aa)) is the ABC transporter 1 domain. N-linked (GlcNAc...) asparagine glycosylation is present at Asn-289. A helical transmembrane segment spans residues 476-496 (VTISSLIGNVITALVIASIFY). N-linked (GlcNAc...) asparagine glycosylation is present at Asn-501. The next 2 membrane-spanning stretches (helical) occupy residues 510-530 (ALLF…MLTL) and 564-584 (VLNA…VLLG). Asn-675 carries an N-linked (GlcNAc...) asparagine glycan. The chain crosses the membrane as a helical span at residues 683–703 (IGIILAFMVVLGAIYLVATDF). The segment at 725–748 (SGKPDDFEGGSDRNASQEKSKSDR) is disordered. Asn-738 carries an N-linked (GlcNAc...) asparagine glycan. A compositionally biased stretch (basic and acidic residues) spans 739–748 (ASQEKSKSDR). Positions 761 to 1003 (FQWQDVCFDI…ILIDYFVRNG (243 aa)) constitute an ABC transporter 2 domain. Transmembrane regions (helical) follow at residues 1105 to 1125 (IYIY…GFSL), 1142 to 1162 (IFLL…HFVT), 1191 to 1211 (LFWN…PIGM), 1230 to 1250 (LLIW…IAAL), 1266 to 1286 (LCLL…FWIF), and 1290 to 1310 (VSPF…DTTV). A glycan (N-linked (GlcNAc...) asparagine) is linked at Asn-1324. Residues 1378–1398 (FGLMWVFIFTNIVAACLLYWW) traverse the membrane as a helical segment.

This sequence belongs to the ABC transporter superfamily. ABCG family. PDR (TC 3.A.1.205) subfamily.

Its subcellular location is the cell membrane. Its function is as follows. ABC-type transporter; part of the gene cluster that mediates the biosynthesis of the sesterterpene variecolin. VrcC is probably involved in the secretion of variecolin. The polypeptide is ABC-type transporter vrcC (Aspergillus aculeatus (strain ATCC 16872 / CBS 172.66 / WB 5094)).